A 1174-amino-acid chain; its full sequence is Fanconi anemia group J protein homolog (1174 aa).

In terms of domain architecture, Helicase ATP-binding spans 11 to 445 (GGVKIHFPCR…KSHEPLRDVC (435 aa)). The span at 101–126 (NLDTSPHFNSPSKPSSGRNGVSTPCQ) shows a compositional bias: polar residues. 2 disordered regions span residues 101-160 (NLDT…EKKR) and 187-208 (LASEKRVKPESPIGKSFSDRKD). Residues 134–143 (LAAKLSAKKQ) are compositionally biased toward low complexity. The short motif at 158-175 (KKRIRPLETTQQIRKRHC) is the Nuclear localization signal element. Residue 185-192 (ARLASEKR) coordinates ATP. Cysteine 286, cysteine 301, cysteine 313, and cysteine 353 together coordinate [4Fe-4S] cluster. Residues 393-396 (VILD) carry the DEAH box motif. Positions 888-1063 (SRRHQKVTNR…SNETADTSLG (176 aa)) are interaction with BRCA1. Composition is skewed to polar residues over residues 923 to 935 (TSVSESSHQSPEN) and 990 to 1001 (SRSSSPTFGKQT). Disordered regions lie at residues 923 to 1001 (TSVS…GKQT) and 1102 to 1155 (LSPG…SSHS). A phosphoserine mark is found at serine 929, serine 932, and serine 994. Residues 1138-1147 (DTNEENGELV) show a composition bias toward acidic residues. Residue lysine 1174 is modified to N6-acetyllysine.

The protein belongs to the DEAD box helicase family. DEAH subfamily. Binds directly to the BRCT domains of BRCA1. Interacts with the CIA complex components CIAO1, CIAO2B and MMS19. [4Fe-4S] cluster is required as a cofactor. In terms of processing, phosphorylated. Phosphorylation is necessary for interaction with BRCA1, and is cell-cycle regulated.

The protein resides in the nucleus. The protein localises to the cytoplasm. It catalyses the reaction Couples ATP hydrolysis with the unwinding of duplex DNA at the replication fork by translocating in the 5'-3' direction. This creates two antiparallel DNA single strands (ssDNA). The leading ssDNA polymer is the template for DNA polymerase III holoenzyme which synthesizes a continuous strand.. It carries out the reaction ATP + H2O = ADP + phosphate + H(+). DNA-dependent helicase and 5' to 3' DNA helicase required for the maintenance of chromosomal stability. Acts late in the Fanconi anemia pathway, after FANCD2 ubiquitination. Involved in the repair of DNA double-strand breaks by homologous recombination in a manner that depends on its association with BRCA1. Involved in the repair of abasic sites at replication forks by promoting the degradation of DNA-protein cross-links: acts by catalyzing unfolding of HMCES DNA-protein cross-link via its helicase activity, exposing the underlying DNA and enabling cleavage of the DNA-protein adduct by the SPRTN metalloprotease. Can unwind RNA:DNA hybrids and G-quadruplex DNA. This is Fanconi anemia group J protein homolog from Mus musculus (Mouse).